The chain runs to 550 residues: MFCVQCEQTIRTPAGNGCSYAQGMCGKTAETSDLQDLLIAALQGLSAWAVKAREYGIINHDVDSFAPRAFFSTLTNVNFDSPRIVGYAREAIALREALKAQCLAVDANARVDNPMADLQLVSDDLGELQRQAAEFTPNKDKAAIGENILGLRLLCLYGLKGAAAYMEHAHVLGQYDNDIYAQYHKIMAWLGTWPADMNALLECSMEIGQMNFKVMSILDAGETSKYGHPTPTQVNVKATAGKCILISGHDLKDLYNLLEQTEGTGVNVYTHGEMLPAHGYPELRKFKHLVGNYGSGWQNQQVEFARFPGPIVMTSNCIIDPTVGAYDDRIWTRSIVGWPGVRHLDGEDFSAVIAQAQQMAGFPYSEIPHLITVGFGRQTLLGAADTLIDLVSREKLRHIFLLGGCDGARGERHYFTDFATSVPDDCLILTLACGKYRFNKLEFGDIEGLPRLVDAGQCNDAYSAIILAVTLAEKLGCGVNDLPLSLVLSWFEQKAIVILLTLLSLGVKNIVTGPTAPGFLTPDLLAVLNEKFGLRSITTVEEDMKQLLSA.

Residues C3, C6, C18, and C25 each coordinate [2Fe-2S] cluster. Residues H249, E273, C317, C405, C433, C458, E492, and K494 each contribute to the hybrid [4Fe-2O-2S] cluster site. C405 carries the cysteine persulfide modification.

This sequence belongs to the HCP family. Requires [2Fe-2S] cluster as cofactor. Hybrid [4Fe-2O-2S] cluster serves as cofactor.

The protein localises to the cytoplasm. It carries out the reaction A + NH4(+) + H2O = hydroxylamine + AH2 + H(+). Catalyzes the reduction of hydroxylamine to form NH(3) and H(2)O. The chain is Hydroxylamine reductase from Escherichia coli O7:K1 (strain IAI39 / ExPEC).